The sequence spans 185 residues: Peptidyl-tRNA hydrolase (185 aa).

A tRNA-binding site is contributed by Tyr14. The active-site Proton acceptor is His19. Residues Phe64, Asn66, and Asn112 each contribute to the tRNA site.

Belongs to the PTH family. Monomer.

It is found in the cytoplasm. The catalysed reaction is an N-acyl-L-alpha-aminoacyl-tRNA + H2O = an N-acyl-L-amino acid + a tRNA + H(+). Its function is as follows. Hydrolyzes ribosome-free peptidyl-tRNAs (with 1 or more amino acids incorporated), which drop off the ribosome during protein synthesis, or as a result of ribosome stalling. Functionally, catalyzes the release of premature peptidyl moieties from peptidyl-tRNA molecules trapped in stalled 50S ribosomal subunits, and thus maintains levels of free tRNAs and 50S ribosomes. This Lacticaseibacillus casei (strain BL23) (Lactobacillus casei) protein is Peptidyl-tRNA hydrolase.